Here is a 911-residue protein sequence, read N- to C-terminus: Beta-galactosidase 12 (911 aa).

Positions 1-25 (MAARVAAAVAAALLAAALLLPGAAA) are cleaved as a signal peptide. Glutamate 192 acts as the Proton donor in catalysis. The active-site Nucleophile is the glutamate 262. 4 N-linked (GlcNAc...) asparagine glycosylation sites follow: asparagine 263, asparagine 389, asparagine 473, and asparagine 777. Residues 744 to 831 (EDTSTRGTLN…ATLAVQLLLA (88 aa)) form the SUEL-type lectin domain.

This sequence belongs to the glycosyl hydrolase 35 family.

It is found in the secreted. Its subcellular location is the extracellular space. The protein localises to the apoplast. The catalysed reaction is Hydrolysis of terminal non-reducing beta-D-galactose residues in beta-D-galactosides.. This is Beta-galactosidase 12 from Oryza sativa subsp. japonica (Rice).